Reading from the N-terminus, the 310-residue chain is tRNA-cytidine(32) 2-sulfurtransferase (310 aa).

A PP-loop motif motif is present at residues 47–52; that stretch reads SGGKDS. 3 residues coordinate [4Fe-4S] cluster: Cys122, Cys125, and Cys213.

Belongs to the TtcA family. As to quaternary structure, homodimer. The cofactor is Mg(2+). Requires [4Fe-4S] cluster as cofactor.

The protein resides in the cytoplasm. It catalyses the reaction cytidine(32) in tRNA + S-sulfanyl-L-cysteinyl-[cysteine desulfurase] + AH2 + ATP = 2-thiocytidine(32) in tRNA + L-cysteinyl-[cysteine desulfurase] + A + AMP + diphosphate + H(+). The protein operates within tRNA modification. Its function is as follows. Catalyzes the ATP-dependent 2-thiolation of cytidine in position 32 of tRNA, to form 2-thiocytidine (s(2)C32). The sulfur atoms are provided by the cysteine/cysteine desulfurase (IscS) system. The sequence is that of tRNA-cytidine(32) 2-sulfurtransferase from Cronobacter sakazakii (strain ATCC BAA-894) (Enterobacter sakazakii).